The primary structure comprises 134 residues: Global transcriptional regulator Spx (134 aa).

The cysteines at positions 10 and 13 are disulfide-linked.

Belongs to the ArsC family. Spx subfamily. As to quaternary structure, interacts with the C-terminal domain of the alpha subunit of the RNAP.

It localises to the cytoplasm. Global transcriptional regulator that plays a key role in stress response and exerts either positive or negative regulation of genes. Acts by interacting with the C-terminal domain of the alpha subunit of the RNA polymerase (RNAP). This interaction can enhance binding of RNAP to the promoter region of target genes and stimulate their transcription, or block interaction of RNAP with activator. This chain is Global transcriptional regulator Spx, found in Streptococcus pyogenes serotype M3 (strain ATCC BAA-595 / MGAS315).